We begin with the raw amino-acid sequence, 513 residues long: Protein indeterminate-domain 11 (513 aa).

The interval 1–84 (MMNKDMLLHQ…QPGNPDPESE (84 aa)) is disordered. A compositionally biased stretch (polar residues) spans 10–45 (QHQQPQQDENMSNLTSASGDQASVSSGNITEASGSN). Over residues 51 to 60 (QQQQEQQQQQ) the composition is skewed to low complexity. Residue Ser-89 is modified to Phosphoserine. 2 C2H2-type zinc fingers span residues 99 to 121 (FVCEICNKGFQRDQNLQLHRRGH) and 141 to 171 (YVCPEASCVHHDPSRALGDLTGIKKHFCRKH). The Nuclear localization signal signature appears at 163 to 170 (IKKHFCRK). A C2H2-type 2; degenerate zinc finger spans residues 176-199 (WKCDKCSKKYAVQSDCKAHSKTCG). The Zn(2+) site is built by Cys-178, Cys-181, His-194, Cys-198, Cys-205, Cys-207, His-220, and Cys-224. A CCHC-type 2; atypical zinc finger spans residues 203–226 (YRCDCGTLFSRRDSFITHRAFCEA). The SHR-binding stretch occupies residues 213 to 225 (RRDSFITHRAFCE). Disordered regions lie at residues 255–280 (ASHPHHHHQTQPTINVSSSSSSSHNH) and 334–358 (PQPHALTSSNPNPSNGGGGGGSLFS). Residues 264-280 (TQPTINVSSSSSSSHNH) are compositionally biased toward low complexity.

It is found in the nucleus. Its function is as follows. Probable transcription factor. This is Protein indeterminate-domain 11 from Arabidopsis thaliana (Mouse-ear cress).